The chain runs to 797 residues: Striatin-3 (797 aa).

Met1 is subject to N-acetylmethionine. Composition is skewed to gly residues over residues 1–13 (MDEL…GGPG) and 23–43 (GPGG…GGGP). The interval 1–60 (MDELAGGGGGGPGMAAPPRQQQGPGGNLGLSPGGNGAAGGGGPPASEGAGPAAGPELSRP) is disordered. Residues 44-56 (PASEGAGPAAGPE) show a composition bias toward low complexity. The interval 71 to 79 (YIQHEWARF) is caveolin-binding. Residues 77-136 (ARFEMERAHWEVERAELQARIAFLQGERKGQENLKKDLVRRIKMLEYALKQERAKYHKLK) are a coiled coil. Thr150 is modified (phosphothreonine). The calmodulin-binding stretch occupies residues 166–183 (QNSQLTWKQGRQLLRQYL). 3 positions are modified to phosphoserine: Ser202, Ser214, and Ser229. Disordered regions lie at residues 224-278 (LNGG…KHRM) and 313-338 (DGEG…SPTA). The segment covering 230–241 (PKQKGQEIKRSS) has biased composition (basic and acidic residues). Acidic residues predominate over residues 253 to 265 (NADDSDEDEENDM). Phosphoserine is present on residues Ser257 and Ser335. WD repeat units follow at residues 478-517 (SHFD…PAKK), 531-570 (AHIG…VDPY), 584-623 (GHTD…PCIC), 679-718 (QSNN…MIHS), 721-760 (AHLD…CVQE), and 767-797 (KLDE…KVFV).

This sequence belongs to the WD repeat striatin family. Tetramerizes. Part of the core of STRIPAK complexes composed of PP2A catalytic and scaffolding subunits, the striatins (PP2A regulatory subunits), the striatin-associated proteins MOB4, STRIP1 and STRIP2, PDCD10 and members of the STE20 kinases, such as STK24 and STK26. The STRIPAK complex can be extended by adapter proteins such as SLMAP:SIKE1 or CTTNBP2NL. Interacts with CDC42BPB.

The protein resides in the cytoplasm. It is found in the membrane. Functionally, calmodulin-binding scaffolding protein which is the center of the striatin-interacting phosphatase and kinase (STRIPAK) complexes. STRIPAK complexes have critical roles in protein (de)phosphorylation and are regulators of multiple signaling pathways including Hippo, MAPK, nuclear receptor and cytoskeleton remodeling. Different types of STRIPAK complexes are involved in a variety of biological processes such as cell growth, differentiation, apoptosis, metabolism and immune regulation. In Homo sapiens (Human), this protein is Striatin-3.